A 657-amino-acid polypeptide reads, in one-letter code: Regulator of MON1-CCZ1 complex (657 aa).

The Mic1 domain occupies K471–E637.

It belongs to the RMC1 family. As to quaternary structure, found in a complex with RMC1, CCZ1 MON1A and MON1B.

It localises to the lysosome membrane. The protein localises to the late endosome membrane. Functionally, component of the CCZ1-MON1 RAB7A guanine exchange factor (GEF). Acts as a positive regulator of CCZ1-MON1A/B function necessary for endosomal/autophagic flux and efficient RAB7A localization. This Homo sapiens (Human) protein is Regulator of MON1-CCZ1 complex.